The sequence spans 330 residues: Aspartate--ammonia ligase (330 aa).

This sequence belongs to the class-II aminoacyl-tRNA synthetase family. AsnA subfamily.

The protein resides in the cytoplasm. The catalysed reaction is L-aspartate + NH4(+) + ATP = L-asparagine + AMP + diphosphate + H(+). It functions in the pathway amino-acid biosynthesis; L-asparagine biosynthesis; L-asparagine from L-aspartate (ammonia route): step 1/1. The protein is Aspartate--ammonia ligase of Treponema pallidum (strain Nichols).